Reading from the N-terminus, the 257-residue chain is Acetyl-coenzyme A carboxylase carboxyl transferase subunit beta (257 aa).

The CoA carboxyltransferase N-terminal domain maps to 5–257 (VFTKCERCKQ…DLERLLGFVG (253 aa)). Residues Cys-9, Cys-12, Cys-28, and Cys-31 each contribute to the Zn(2+) site. The C4-type zinc finger occupies 9–31 (CERCKQPVYEKDLRARFNVCPNC).

This sequence belongs to the AccD/PCCB family. In terms of assembly, acetyl-CoA carboxylase is a heterohexamer composed of biotin carboxyl carrier protein (AccB), biotin carboxylase (AccC) and two subunits each of ACCase subunit alpha (AccA) and ACCase subunit beta (AccD). It depends on Zn(2+) as a cofactor.

The protein localises to the cytoplasm. The enzyme catalyses N(6)-carboxybiotinyl-L-lysyl-[protein] + acetyl-CoA = N(6)-biotinyl-L-lysyl-[protein] + malonyl-CoA. The protein operates within lipid metabolism; malonyl-CoA biosynthesis; malonyl-CoA from acetyl-CoA: step 1/1. Its function is as follows. Component of the acetyl coenzyme A carboxylase (ACC) complex. Biotin carboxylase (BC) catalyzes the carboxylation of biotin on its carrier protein (BCCP) and then the CO(2) group is transferred by the transcarboxylase to acetyl-CoA to form malonyl-CoA. The sequence is that of Acetyl-coenzyme A carboxylase carboxyl transferase subunit beta from Rubrobacter xylanophilus (strain DSM 9941 / JCM 11954 / NBRC 16129 / PRD-1).